The primary structure comprises 304 residues: Ribosomal RNA small subunit methyltransferase H (304 aa).

Residues 37–39, Asp-57, Phe-79, Asp-100, and His-107 each bind S-adenosyl-L-methionine; that span reads GGH.

It belongs to the methyltransferase superfamily. RsmH family.

It is found in the cytoplasm. The enzyme catalyses cytidine(1402) in 16S rRNA + S-adenosyl-L-methionine = N(4)-methylcytidine(1402) in 16S rRNA + S-adenosyl-L-homocysteine + H(+). Its function is as follows. Specifically methylates the N4 position of cytidine in position 1402 (C1402) of 16S rRNA. This is Ribosomal RNA small subunit methyltransferase H from Bacteroides fragilis (strain ATCC 25285 / DSM 2151 / CCUG 4856 / JCM 11019 / LMG 10263 / NCTC 9343 / Onslow / VPI 2553 / EN-2).